The sequence spans 121 residues: Small ribosomal subunit protein uS13 (121 aa).

The segment at 93 to 121 is disordered; that stretch reads RGLPMRGQRTRTNARTRKGPRKAAQSLKK.

The protein belongs to the universal ribosomal protein uS13 family. As to quaternary structure, part of the 30S ribosomal subunit. Forms a loose heterodimer with protein S19. Forms two bridges to the 50S subunit in the 70S ribosome.

In terms of biological role, located at the top of the head of the 30S subunit, it contacts several helices of the 16S rRNA. In the 70S ribosome it contacts the 23S rRNA (bridge B1a) and protein L5 of the 50S subunit (bridge B1b), connecting the 2 subunits; these bridges are implicated in subunit movement. Contacts the tRNAs in the A and P-sites. The sequence is that of Small ribosomal subunit protein uS13 from Variovorax paradoxus (strain S110).